The primary structure comprises 151 residues: Ribosome maturation factor RimP (151 aa).

The protein belongs to the RimP family.

It localises to the cytoplasm. Required for maturation of 30S ribosomal subunits. The protein is Ribosome maturation factor RimP of Shewanella sp. (strain ANA-3).